Consider the following 408-residue polypeptide: 26S proteasome regulatory subunit 6B homolog (408 aa).

Residue alanine 2 is modified to N-acetylalanine. A Phosphoserine modification is found at serine 16. Residues 28–75 (EDLYGRLKSLERQLEFTDIQEEYVKDEQKNLKRELLRAQEEVKRIQSV) adopt a coiled-coil conformation. Residue 196 to 203 (GPPGTGKT) coordinates ATP.

This sequence belongs to the AAA ATPase family. Component of the 19S regulatory particle (RP/PA700) base subcomplex of the 26S proteasome. The 26S proteasome is composed of a core protease (CP), known as the 20S proteasome, capped at one or both ends by the 19S regulatory particle (RP/PA700). The RP/PA700 complex is composed of at least 17 different subunits in two subcomplexes, the base and the lid, which form the portions proximal and distal to the 20S proteolytic core, respectively. Expressed in dark-grown etiolated seedlings, roots, leaves, stems and flowers.

The protein resides in the cytoplasm. The protein localises to the nucleus. Its function is as follows. The 26S proteasome is involved in the ATP-dependent degradation of ubiquitinated proteins. The regulatory (or ATPase) complex confers ATP dependency and substrate specificity to the 26S complex. This chain is 26S proteasome regulatory subunit 6B homolog (RPT3), found in Arabidopsis thaliana (Mouse-ear cress).